The sequence spans 333 residues: 2-oxoglutarate-dependent dioxygenase 21, chloroplastic (333 aa).

The transit peptide at 1–43 (MPAVAGSLYMASQHKGVPPPLPPPPRPLPVINLGRLTMDSASR) directs the protein to the chloroplast. The 102-residue stretch at 180 to 281 (GVQFVALNNY…RISIASIHGL (102 aa)) folds into the Fe2OG dioxygenase domain. 3 residues coordinate Fe cation: histidine 205, aspartate 207, and histidine 262. Arginine 272 is a 2-oxoglutarate binding site.

This sequence belongs to the iron/ascorbate-dependent oxidoreductase family. It depends on Fe(2+) as a cofactor. L-ascorbate is required as a cofactor. In terms of tissue distribution, expressed in roots.

The protein resides in the plastid. It is found in the chloroplast. It carries out the reaction melatonin + 2-oxoglutarate + O2 = 2-hydroxymelatonin + succinate + CO2. Functionally, involved in melatonin degradation. Catalyzes the hydroxylation of melatonin to produce 2-hydroxymelatonin. In Oryza sativa subsp. japonica (Rice), this protein is 2-oxoglutarate-dependent dioxygenase 21, chloroplastic.